The chain runs to 58 residues: Probable mRNA interferase HicA 2 (58 aa).

Belongs to the HicA mRNA interferase family. As to quaternary structure, probably forms a complex with the cognate antitoxin HicB 2 which inhibits the mRNA interferase activity.

In terms of biological role, toxic component of a type II toxin-antitoxin (TA) system. A probable translation-independent mRNA interferase. This chain is Probable mRNA interferase HicA 2 (hicA2), found in Photorhabdus laumondii subsp. laumondii (strain DSM 15139 / CIP 105565 / TT01) (Photorhabdus luminescens subsp. laumondii).